A 267-amino-acid polypeptide reads, in one-letter code: Serine/arginine-rich splicing factor 7 (267 aa).

The RRM domain occupies 40 to 113; it reads TKVYVGNLGT…SRVRVELSTG (74 aa). The residue at position 53 (Lys53) is an N6-acetyllysine; alternate. Residue Lys53 forms a Glycyl lysine isopeptide (Lys-Gly) (interchain with G-Cter in SUMO2); alternate linkage. Ser61 is subject to Phosphoserine. The interval 110 to 127 is sufficient for interaction with NXF1; the sequence is LSTGMPRRSRFDRPPARR. The CCHC-type zinc-finger motif lies at 133–150; it reads DRCYECGEKGHYAYDCHR. The segment covering 152–209 has biased composition (basic residues); that stretch reads SRRRRSRSRSRSHSRSRGRRYSRSRSRSRGRRSRSASPRRSRSVSLRRSRSASLRRSR. A disordered region spans residues 152–267; it reads SRRRRSRSRS…HRSASPERMD (116 aa). 4 repeat units span residues 182-189, 190-197, 198-205, and 206-213. The interval 182-255 is 6 X 8 AA repeats of R-R-S-R-S-X-S-X; it reads RRSRSASPRR…SPKRSRSPSG (74 aa). A phosphoserine mark is found at Ser192, Ser194, and Ser196. Residues Ser210, Ser212, Ser221, Ser223, and Ser225 each carry the phosphoserine modification. Positions 223–251 are enriched in basic residues; it reads SRSRSRSRSISRPRSSRSKSRSPSPKRSR. One copy of the 5; approximate repeat lies at 240–247; the sequence is SKSRSPSP. A 6; approximate repeat occupies 248 to 255; the sequence is KRSRSPSG. Ser260 and Ser262 each carry phosphoserine.

Belongs to the splicing factor SR family. As to quaternary structure, found in large molecular weight complexes containing CCNL1 and the p110 isoforms of either CDC2L1 or CDC2L2. Interacts with CCNL2 and CPSF6. Interacts with NXF1. Interacts with YTHDC1. Extensively phosphorylated on serine residues in the RS domain.

It is found in the nucleus. It localises to the cytoplasm. In terms of biological role, required for pre-mRNA splicing. Represses the splicing of MAPT/Tau exon 10. May function as export adapter involved in mRNA nuclear export such as of histone H2A. Binds mRNA which is thought to be transferred to the NXF1-NXT1 heterodimer for export (TAP/NXF1 pathway); enhances NXF1-NXT1 RNA-binding activity. RNA-binding is semi-sequence specific. In Mus musculus (Mouse), this protein is Serine/arginine-rich splicing factor 7 (Srsf7).